Reading from the N-terminus, the 152-residue chain is Transcriptional regulator MraZ (152 aa).

SpoVT-AbrB domains are found at residues 5–52 and 81–124; these read ATTL…PLPE and ADDC…NEDA.

Belongs to the MraZ family. In terms of assembly, forms oligomers.

The protein localises to the cytoplasm. It localises to the nucleoid. The protein is Transcriptional regulator MraZ of Idiomarina loihiensis (strain ATCC BAA-735 / DSM 15497 / L2-TR).